The sequence spans 240 residues: Orotidine 5'-phosphate decarboxylase (240 aa).

Substrate is bound by residues aspartate 19, lysine 41, 68–77 (DYKYYDIEET), threonine 123, arginine 184, glutamine 193, glycine 213, and arginine 214. The active-site Proton donor is lysine 70.

Belongs to the OMP decarboxylase family. Type 1 subfamily. As to quaternary structure, homodimer.

The enzyme catalyses orotidine 5'-phosphate + H(+) = UMP + CO2. The protein operates within pyrimidine metabolism; UMP biosynthesis via de novo pathway; UMP from orotate: step 2/2. Its function is as follows. Catalyzes the decarboxylation of orotidine 5'-monophosphate (OMP) to uridine 5'-monophosphate (UMP). The sequence is that of Orotidine 5'-phosphate decarboxylase from Nitrobacter winogradskyi (strain ATCC 25391 / DSM 10237 / CIP 104748 / NCIMB 11846 / Nb-255).